A 231-amino-acid chain; its full sequence is MASQWQGMRTSVRRRSLLKEEQLEKKEVTRSAGGHPETGPLGSLCRQFQRRLPLRAVSLNLGNGPSWKRLESPEPEQQGLQAAARSAKSALGAMSQRIQESCQSGTKWLMETQVKVRRKRGAQKDRGSPPPSLSQKNTRLCRANRDARVGGHLRLSGQMGPHAHRRQRLRRESALRSPCSSTEPLCSPSESDSDLEPVGAGIQHLQKLSQRLDRAIKAEESGDMTVSLIRE.

Residues Met1–Leu44 form a disordered region. 2 positions are modified to phosphoserine: Ser11 and Ser16. Short sequence motifs (D-box) lie at residues Arg14–Leu17 and Pro53–Ala56. The segment covering Leu17–Thr29 has biased composition (basic and acidic residues). Ser72 is modified (phosphoserine). 2 disordered regions span residues Lys115–Thr138 and His152–Pro197. At Ser128 the chain carries Phosphoserine; by Uhmk1; in vitro. The span at Pro178 to Glu190 shows a compositional bias: polar residues. Phosphoserine is present on residues Ser191 and Ser193.

As to quaternary structure, interacts with PICALM; this interaction may target PICALM to the nucleus. During mitosis, associates with HDAC2 and MTA2 subunits of the chromatin-remodeling NuRD complex; this association is strongest at prometaphase and decreases as the cell progresses through metaphase and anaphase. Post-translationally, ubiquitinated by the anaphase-promoting complex/cyclosome (APC/C) complex in the presence of FZR1, leading to its degradation by the proteasome during mitotic exit. However, degradation is not essential for normal mitotic progression within a single cell cycle. Mainly expressed in thymus and ovary. Expressed in all T-cell subpopulations isolated from the thymus, macrophages, pro-erythrocytes, granulocytes, mast cells and progenitor cells.

Its subcellular location is the nucleus. It localises to the nucleolus. In terms of biological role, during mitosis, may play a role in the metaphase-to-anaphase transition. The sequence is that of Protein PIMREG from Mus musculus (Mouse).